The chain runs to 40 residues: Photosystem II reaction center protein J (40 aa).

Residues 8-28 form a helical membrane-spanning segment; it reads IPLWLIGTVTGIAVIGLIGVF.

The protein belongs to the PsbJ family. As to quaternary structure, PSII is composed of 1 copy each of membrane proteins PsbA, PsbB, PsbC, PsbD, PsbE, PsbF, PsbH, PsbI, PsbJ, PsbK, PsbL, PsbM, PsbT, PsbX, PsbY, PsbZ, Psb30/Ycf12, at least 3 peripheral proteins of the oxygen-evolving complex and a large number of cofactors. It forms dimeric complexes.

The protein resides in the plastid. It localises to the chloroplast thylakoid membrane. In terms of biological role, one of the components of the core complex of photosystem II (PSII). PSII is a light-driven water:plastoquinone oxidoreductase that uses light energy to abstract electrons from H(2)O, generating O(2) and a proton gradient subsequently used for ATP formation. It consists of a core antenna complex that captures photons, and an electron transfer chain that converts photonic excitation into a charge separation. The polypeptide is Photosystem II reaction center protein J (Oryza nivara (Indian wild rice)).